We begin with the raw amino-acid sequence, 263 residues long: HTH-type transcriptional repressor NanR (263 aa).

Residues Met-1–Leu-22 form a disordered region. The 69-residue stretch at Lys-30–Pro-98 folds into the HTH gntR-type domain. Residues Glu-58–Ala-77 constitute a DNA-binding region (H-T-H motif).

Belongs to the NanR family.

Transcriptional repressor that controls expression of the genes required for the catabolism of sialic acids. The chain is HTH-type transcriptional repressor NanR from Shigella sonnei (strain Ss046).